The following is a 156-amino-acid chain: 6,7-dimethyl-8-ribityllumazine synthase (156 aa).

5-amino-6-(D-ribitylamino)uracil-binding positions include phenylalanine 28, alanine 62–glutamate 64, and alanine 86–isoleucine 88. Position 91–92 (glutamate 91–threonine 92) interacts with (2S)-2-hydroxy-3-oxobutyl phosphate. The active-site Proton donor is the histidine 94. Asparagine 119 provides a ligand contact to 5-amino-6-(D-ribitylamino)uracil. Arginine 133 contributes to the (2S)-2-hydroxy-3-oxobutyl phosphate binding site.

The protein belongs to the DMRL synthase family.

The enzyme catalyses (2S)-2-hydroxy-3-oxobutyl phosphate + 5-amino-6-(D-ribitylamino)uracil = 6,7-dimethyl-8-(1-D-ribityl)lumazine + phosphate + 2 H2O + H(+). It functions in the pathway cofactor biosynthesis; riboflavin biosynthesis; riboflavin from 2-hydroxy-3-oxobutyl phosphate and 5-amino-6-(D-ribitylamino)uracil: step 1/2. Functionally, catalyzes the formation of 6,7-dimethyl-8-ribityllumazine by condensation of 5-amino-6-(D-ribitylamino)uracil with 3,4-dihydroxy-2-butanone 4-phosphate. This is the penultimate step in the biosynthesis of riboflavin. The polypeptide is 6,7-dimethyl-8-ribityllumazine synthase (Azoarcus sp. (strain BH72)).